The primary structure comprises 359 residues: MNSSSSEVQVCVTGGAGFIGSYLVKKLLEKGYTVHATLRNTGEDRAAAAAGPRRGGASAVVPLFEADLFDAATFAPAIAGCQFVFLVATPYGLEAAGSKYKSTAEAAVAAVRVILRQCEESKTVKRVIHTASISTASPLKDKEAEGSGDGYKDFISESCWTPLNVDYHLRSAHFDKYILAKLRSEQELLSYNGGESPAFEVVTLPLGLVAGDTVLGHAPETLEHAVSPVSREELSFKFLRLLQSLLGSEPLVHVDDACEALLFCMERPSIAGRFFCAAAYPSIHDITDHYASKFPHLDVLRATEAVAVAVQPEVDRLGELGFRYKYGMEEILDSSVACAARLGSLDAAKLNVPDTVSSK.

NADP(+) is bound by residues Arg39, 67 to 68 (DL), 87 to 89 (VAT), Tyr177, Lys181, 206 to 209 (LGLV), and Thr221. Lys181 acts as the Proton donor in catalysis.

Belongs to the NAD(P)-dependent epimerase/dehydratase family.

In tandem with Hm1, NADPH-dependent HC toxin reductase (HCTR), which inactivates HC toxin, a cyclic tetrapeptide produced by the fungus Cochliobolus carbonum to permit infection and acting as an inhibitor of host histone deacetylases (HDACs), thus conferring resistance against C.carbonum race 1 in resistant cultivars (e.g. cv. B73 and cv. Wisconsin 22). Catalyzes the production of 8-hydroxy derivative of HC-toxin via the reduction of the 8-keto group of 2-amino-9,10-epoxy-8-oxo-decanoic acid, an amino acid of the HC-toxin. In Zea mays (Maize), this protein is NADPH HC-toxin reductase 2.